The sequence spans 368 residues: 3-dehydroquinate synthase (368 aa).

NAD(+) is bound by residues 99–103 (GVVGD), 123–124 (TT), K136, and K145. Zn(2+) is bound by residues E178, H242, and H259.

It belongs to the sugar phosphate cyclases superfamily. Dehydroquinate synthase family. Requires NAD(+) as cofactor. Co(2+) serves as cofactor. The cofactor is Zn(2+).

It localises to the cytoplasm. It carries out the reaction 7-phospho-2-dehydro-3-deoxy-D-arabino-heptonate = 3-dehydroquinate + phosphate. The protein operates within metabolic intermediate biosynthesis; chorismate biosynthesis; chorismate from D-erythrose 4-phosphate and phosphoenolpyruvate: step 2/7. Catalyzes the conversion of 3-deoxy-D-arabino-heptulosonate 7-phosphate (DAHP) to dehydroquinate (DHQ). This Chlorobaculum tepidum (strain ATCC 49652 / DSM 12025 / NBRC 103806 / TLS) (Chlorobium tepidum) protein is 3-dehydroquinate synthase.